Consider the following 337-residue polypeptide: tRNA N6-adenosine threonylcarbamoyltransferase (337 aa).

Positions 111 and 115 each coordinate Fe cation. Substrate-binding positions include 134–138 (LVSGG), D167, G180, and N272. Position 300 (D300) interacts with Fe cation.

Belongs to the KAE1 / TsaD family. It depends on Fe(2+) as a cofactor.

It localises to the cytoplasm. The catalysed reaction is L-threonylcarbamoyladenylate + adenosine(37) in tRNA = N(6)-L-threonylcarbamoyladenosine(37) in tRNA + AMP + H(+). Functionally, required for the formation of a threonylcarbamoyl group on adenosine at position 37 (t(6)A37) in tRNAs that read codons beginning with adenine. Is involved in the transfer of the threonylcarbamoyl moiety of threonylcarbamoyl-AMP (TC-AMP) to the N6 group of A37, together with TsaE and TsaB. TsaD likely plays a direct catalytic role in this reaction. The chain is tRNA N6-adenosine threonylcarbamoyltransferase from Shewanella sediminis (strain HAW-EB3).